A 136-amino-acid chain; its full sequence is Large ribosomal subunit protein uL16 (136 aa).

The protein belongs to the universal ribosomal protein uL16 family. Part of the 50S ribosomal subunit.

In terms of biological role, binds 23S rRNA and is also seen to make contacts with the A and possibly P site tRNAs. The polypeptide is Large ribosomal subunit protein uL16 (Shewanella piezotolerans (strain WP3 / JCM 13877)).